Consider the following 307-residue polypeptide: Small ribosomal subunit biogenesis GTPase RsgA (307 aa).

In terms of domain architecture, CP-type G spans 64–229 (KNSLIRPSIA…IADTPGFSSL (166 aa)). Residues 113 to 116 (SKLD) and 172 to 180 (GQTGAGKTT) contribute to the GTP site. The Zn(2+) site is built by Cys253, Cys258, His260, and Cys266.

It belongs to the TRAFAC class YlqF/YawG GTPase family. RsgA subfamily. In terms of assembly, monomer. Associates with 30S ribosomal subunit, binds 16S rRNA. The cofactor is Zn(2+).

It is found in the cytoplasm. Functionally, one of several proteins that assist in the late maturation steps of the functional core of the 30S ribosomal subunit. Helps release RbfA from mature subunits. May play a role in the assembly of ribosomal proteins into the subunit. Circularly permuted GTPase that catalyzes slow GTP hydrolysis, GTPase activity is stimulated by the 30S ribosomal subunit. In Lactococcus lactis subsp. lactis (strain IL1403) (Streptococcus lactis), this protein is Small ribosomal subunit biogenesis GTPase RsgA.